We begin with the raw amino-acid sequence, 545 residues long: Glucose-6-phosphate isomerase (545 aa).

Catalysis depends on E351, which acts as the Proton donor. Catalysis depends on residues H382 and K510.

It belongs to the GPI family.

Its subcellular location is the cytoplasm. It catalyses the reaction alpha-D-glucose 6-phosphate = beta-D-fructose 6-phosphate. It functions in the pathway carbohydrate biosynthesis; gluconeogenesis. Its pathway is carbohydrate degradation; glycolysis; D-glyceraldehyde 3-phosphate and glycerone phosphate from D-glucose: step 2/4. Functionally, catalyzes the reversible isomerization of glucose-6-phosphate to fructose-6-phosphate. This is Glucose-6-phosphate isomerase from Shewanella woodyi (strain ATCC 51908 / MS32).